A 360-amino-acid chain; its full sequence is tRNA-specific 2-thiouridylase MnmA (360 aa).

Residues Ala-9–Ser-16 and Leu-35 contribute to the ATP site. Cys-104 acts as the Nucleophile in catalysis. Residues Cys-104 and Cys-197 are joined by a disulfide bond. Gly-128 contacts ATP. Positions Lys-147 to Gln-149 are interaction with tRNA. Residue Cys-197 is the Cysteine persulfide intermediate of the active site.

Belongs to the MnmA/TRMU family.

The protein resides in the cytoplasm. It carries out the reaction S-sulfanyl-L-cysteinyl-[protein] + uridine(34) in tRNA + AH2 + ATP = 2-thiouridine(34) in tRNA + L-cysteinyl-[protein] + A + AMP + diphosphate + H(+). Catalyzes the 2-thiolation of uridine at the wobble position (U34) of tRNA, leading to the formation of s(2)U34. The chain is tRNA-specific 2-thiouridylase MnmA from Salinispora arenicola (strain CNS-205).